We begin with the raw amino-acid sequence, 204 residues long: Shikimate kinase (204 aa).

ATP is bound at residue 35 to 40 (ASGKST). Ser39 is a Mg(2+) binding site. The substrate site is built by Asp57, Arg81, and Gly103. Arg142 contributes to the ATP binding site. Substrate is bound at residue Arg169.

Belongs to the shikimate kinase family. As to quaternary structure, monomer. Mg(2+) serves as cofactor.

The protein resides in the cytoplasm. It carries out the reaction shikimate + ATP = 3-phosphoshikimate + ADP + H(+). It participates in metabolic intermediate biosynthesis; chorismate biosynthesis; chorismate from D-erythrose 4-phosphate and phosphoenolpyruvate: step 5/7. In terms of biological role, catalyzes the specific phosphorylation of the 3-hydroxyl group of shikimic acid using ATP as a cosubstrate. The protein is Shikimate kinase of Salinibacter ruber (strain DSM 13855 / M31).